The primary structure comprises 299 residues: Cold shock protein 1 (299 aa).

The residue at position 2 (alanine 2) is an N-acetylalanine. In terms of domain architecture, CSD spans 12 to 76; the sequence is TGKVNWFNAS…GKTKAVNVTA (65 aa). The segment at 76 to 97 is disordered; the sequence is APGGGSLKKENNSRGNGARRGG. 7 consecutive CCHC-type zinc fingers follow at residues 100-117, 132-149, 164-181, 198-215, 230-247, 253-270, and 280-297; these read SGCY…DCGI, EGCY…DCTS, DGCY…DCTQ, GTCY…DCAT, RGCY…DCDQ, and NACY…ECSS.

Belongs to the cold shock protein (CSP) family. In terms of tissue distribution, mostly expressed in shoot apices and siliques, and, to a lower extent, in roots, cotyledons, stems, shoots, leaves, floral buds and flowers.

It localises to the nucleus. Its subcellular location is the cytoplasm. Functionally, chaperone that binds to RNA, single- (ssDNA) and double-stranded (dsDNA) DNA, and unwinds nucleic acid duplex. Exhibits a DNA melting activity. May be involved in cold resistance. Prevents seed germination under dehydration or salt stress conditions. This chain is Cold shock protein 1 (CSP1), found in Arabidopsis thaliana (Mouse-ear cress).